A 385-amino-acid polypeptide reads, in one-letter code: Acetate kinase (385 aa).

Residue Asn-8 participates in Mg(2+) binding. Lys-15 serves as a coordination point for ATP. Residue Arg-85 coordinates substrate. Catalysis depends on Asp-142, which acts as the Proton donor/acceptor. Residues His-200–Gly-204, Asp-275–Arg-277, and Gly-323–Asn-327 contribute to the ATP site. Residue Glu-373 coordinates Mg(2+).

The protein belongs to the acetokinase family. In terms of assembly, homodimer. It depends on Mg(2+) as a cofactor. Mn(2+) serves as cofactor.

The protein localises to the cytoplasm. It carries out the reaction acetate + ATP = acetyl phosphate + ADP. It participates in metabolic intermediate biosynthesis; acetyl-CoA biosynthesis; acetyl-CoA from acetate: step 1/2. Functionally, catalyzes the formation of acetyl phosphate from acetate and ATP. Can also catalyze the reverse reaction. This chain is Acetate kinase, found in Francisella tularensis subsp. holarctica (strain OSU18).